The primary structure comprises 287 residues: Large ribosomal subunit protein uL2 (287 aa).

The tract at residues 222-266 is disordered; the sequence is RGIRPTVRGSAMNPNDHPHGGGEGRSPVGRDAPRTPWGKRHMGVK.

The protein belongs to the universal ribosomal protein uL2 family. In terms of assembly, part of the 50S ribosomal subunit. Forms a bridge to the 30S subunit in the 70S ribosome.

Its function is as follows. One of the primary rRNA binding proteins. Required for association of the 30S and 50S subunits to form the 70S ribosome, for tRNA binding and peptide bond formation. It has been suggested to have peptidyltransferase activity; this is somewhat controversial. Makes several contacts with the 16S rRNA in the 70S ribosome. The polypeptide is Large ribosomal subunit protein uL2 (Mycoplasma pneumoniae (strain ATCC 29342 / M129 / Subtype 1) (Mycoplasmoides pneumoniae)).